The primary structure comprises 410 residues: Transcription termination factor, mitochondrial (410 aa).

Residues 1–44 (MIRSLLRSFETALKLHAGLNMHPMHCSRRLLFSQYENRASPSRL) constitute a mitochondrion transit peptide.

This sequence belongs to the mTERF family.

Its subcellular location is the mitochondrion. Functionally, transcription termination factor. Binds promoter DNA and regulates mitochondrial replication and transcription. Transcription termination activity may be polarized with highest termination activity occurring when its DNA-binding site is positioned in the reverse orientation with respect to the incoming RNA polymerase. Required for normal topology and maintenance of mitochondrial DNA (mtDNA) levels. Regulates mtDNA replication by promoting replication pausing, possibly by acting as a natural barrier to replication fork progression. Its function in replication pausing prevents unregulated replication that may occur for example by collisions between the machineries of DNA replication and transcription during mtDNA synthesis. This ensures the incorporation of RNA transcripts into replication intermediates at the replication fork and allow for proper fork progression. Shares mtDNA binding sites with the mitochondrial termination factor mTerf5 and thereby may antagonize mTerf5 function during replication to regulate pausing. Likely to function downstream of Dref which activates genes involved in mtDNA replication and maintenance. The sequence is that of Transcription termination factor, mitochondrial from Drosophila melanogaster (Fruit fly).